The chain runs to 194 residues: PBAN-type neuropeptides (194 aa).

Positions 1 to 23 (MFNQTQLFVFLAVFTTSSVLGNN) are cleaved as a signal peptide. Leu47 carries the post-translational modification Leucine amide. The propeptide occupies 51–94 (SLRISTEDNRQAFFKLLEAADALKYYYDQLPYEMQADEPETRVT). Leucine amide occurs at positions 103, 123, 159, and 169. Positions 172 to 194 (ELSYDMMPNKIRVVRSTNKTRST) are excised as a propeptide.

Belongs to the pyrokinin family. Expressed in the subesophageal ganglions. Not found in corpora cardiaca, corpora allata and thoracic ganglia.

The protein localises to the secreted. A hormone that controls sex pheromone production in females and pheromone responsiveness in male. Also mediates visceral muscle contractile activity (myotropic activity). This chain is PBAN-type neuropeptides, found in Helicoverpa zea (Corn earworm moth).